Here is a 440-residue protein sequence, read N- to C-terminus: Methylthioribose-1-phosphate isomerase (440 aa).

D285 (proton donor) is an active-site residue.

The protein belongs to the eIF-2B alpha/beta/delta subunits family. MtnA subfamily.

It localises to the cytoplasm. Its subcellular location is the nucleus. The enzyme catalyses 5-(methylsulfanyl)-alpha-D-ribose 1-phosphate = 5-(methylsulfanyl)-D-ribulose 1-phosphate. It functions in the pathway amino-acid biosynthesis; L-methionine biosynthesis via salvage pathway; L-methionine from S-methyl-5-thio-alpha-D-ribose 1-phosphate: step 1/6. Catalyzes the interconversion of methylthioribose-1-phosphate (MTR-1-P) into methylthioribulose-1-phosphate (MTRu-1-P). The protein is Methylthioribose-1-phosphate isomerase (mri1) of Botryotinia fuckeliana (strain B05.10) (Noble rot fungus).